We begin with the raw amino-acid sequence, 475 residues long: Aspartyl/glutamyl-tRNA(Asn/Gln) amidotransferase subunit B (475 aa).

The protein belongs to the GatB/GatE family. GatB subfamily. As to quaternary structure, heterotrimer of A, B and C subunits.

The catalysed reaction is L-glutamyl-tRNA(Gln) + L-glutamine + ATP + H2O = L-glutaminyl-tRNA(Gln) + L-glutamate + ADP + phosphate + H(+). The enzyme catalyses L-aspartyl-tRNA(Asn) + L-glutamine + ATP + H2O = L-asparaginyl-tRNA(Asn) + L-glutamate + ADP + phosphate + 2 H(+). In terms of biological role, allows the formation of correctly charged Asn-tRNA(Asn) or Gln-tRNA(Gln) through the transamidation of misacylated Asp-tRNA(Asn) or Glu-tRNA(Gln) in organisms which lack either or both of asparaginyl-tRNA or glutaminyl-tRNA synthetases. The reaction takes place in the presence of glutamine and ATP through an activated phospho-Asp-tRNA(Asn) or phospho-Glu-tRNA(Gln). The chain is Aspartyl/glutamyl-tRNA(Asn/Gln) amidotransferase subunit B from Helicobacter pylori (strain HPAG1).